The sequence spans 218 residues: N-(5'-phosphoribosyl)anthranilate isomerase (218 aa).

The protein belongs to the TrpF family.

The enzyme catalyses N-(5-phospho-beta-D-ribosyl)anthranilate = 1-(2-carboxyphenylamino)-1-deoxy-D-ribulose 5-phosphate. The protein operates within amino-acid biosynthesis; L-tryptophan biosynthesis; L-tryptophan from chorismate: step 3/5. The protein is N-(5'-phosphoribosyl)anthranilate isomerase of Rhodospirillum rubrum (strain ATCC 11170 / ATH 1.1.1 / DSM 467 / LMG 4362 / NCIMB 8255 / S1).